The chain runs to 94 residues: Small ribosomal subunit protein uS19 (94 aa).

The protein belongs to the universal ribosomal protein uS19 family.

In terms of biological role, protein S19 forms a complex with S13 that binds strongly to the 16S ribosomal RNA. The polypeptide is Small ribosomal subunit protein uS19 (Moorella thermoacetica (strain ATCC 39073 / JCM 9320)).